The primary structure comprises 266 residues: Glucosamine-6-phosphate deaminase (266 aa).

Catalysis depends on Asp-72, which acts as the Proton acceptor; for enolization step. Asp-141 acts as the For ring-opening step in catalysis. Residue His-143 is the Proton acceptor; for ring-opening step of the active site. The For ring-opening step role is filled by Glu-148.

It belongs to the glucosamine/galactosamine-6-phosphate isomerase family. NagB subfamily. As to quaternary structure, homohexamer.

It catalyses the reaction alpha-D-glucosamine 6-phosphate + H2O = beta-D-fructose 6-phosphate + NH4(+). Its pathway is amino-sugar metabolism; N-acetylneuraminate degradation; D-fructose 6-phosphate from N-acetylneuraminate: step 5/5. With respect to regulation, allosterically activated by N-acetylglucosamine 6-phosphate (GlcNAc6P). Functionally, catalyzes the reversible isomerization-deamination of glucosamine 6-phosphate (GlcN6P) to form fructose 6-phosphate (Fru6P) and ammonium ion. The sequence is that of Glucosamine-6-phosphate deaminase from Pectobacterium carotovorum subsp. carotovorum (strain PC1).